A 124-amino-acid chain; its full sequence is KESPAKKFQRQHMDPDSSSSNSSNYCNLMMSRRNMTQGRCKPVNTFVHESLADVQAVCSQINVNCKNGQTNCYQSNSTMHITDCRQTGSSKYPNCAYKASQEQKHIIVACEGNPPVPVHFDASV.

A compositionally biased stretch (basic and acidic residues) spans 1–15; it reads KESPAKKFQRQHMDP. The segment at 1-24 is disordered; the sequence is KESPAKKFQRQHMDPDSSSSNSSN. 2 residues coordinate substrate: Lys7 and Arg10. Catalysis depends on His12, which acts as the Proton acceptor. N-linked (GlcNAc...) asparagine glycosylation is found at Asn21 and Asn34. 4 disulfide bridges follow: Cys26–Cys84, Cys40–Cys95, Cys58–Cys110, and Cys65–Cys72. Substrate is bound by residues 41–45 and Lys66; that span reads KPVNT. N-linked (GlcNAc...) asparagine glycosylation occurs at Asn76. Substrate is bound at residue Arg85. His119 acts as the Proton donor in catalysis.

Belongs to the pancreatic ribonuclease family. In terms of assembly, monomer. Interacts with and forms tight 1:1 complexes with RNH1. Dimerization of two such complexes may occur. Interaction with RNH1 inhibits this protein. As to expression, pancreas.

Its subcellular location is the secreted. The catalysed reaction is an [RNA] containing cytidine + H2O = an [RNA]-3'-cytidine-3'-phosphate + a 5'-hydroxy-ribonucleotide-3'-[RNA].. The enzyme catalyses an [RNA] containing uridine + H2O = an [RNA]-3'-uridine-3'-phosphate + a 5'-hydroxy-ribonucleotide-3'-[RNA].. In terms of biological role, endonuclease that catalyzes the cleavage of RNA on the 3' side of pyrimidine nucleotides. Acts on single-stranded and double-stranded RNA. The chain is Ribonuclease pancreatic (RNASE1) from Sus scrofa (Pig).